The sequence spans 461 residues: MASTPRTPAPVRSPPPVPTPTHPTPPPPPLETPQPPLPVSTPPPALETPPPRRVRTPPPPLETPPPPSPSSSQPGDEYHTPAPSLADGSPREEEASFPSDGREGGGAPAPPKSPQLSPMRLAAPRLLLPPPSPRTPTGQNGQEEQEGGAKAAAAGAGTGTGTAAPARQQLRLTGLARSPSSQRSLATTNSSPSPSPSPTPPSPLTPAAAPVVNNNSNNKNNRSGQSTPKRAAETKLPLSSPAATATIAVQHFNPVEEAVTSPLHLGIGKAQRLDHHQHQHQQRQEQHAAAAAVENGGSVPPDVAAAVAVGERRELSVTLRLATAVLSLAAFSVIASARTSGWAGDYYAHHLQYRYAVAVNVIVCAYSIAQSFGEIRRLISPRFIFRSMSSYYCSLFLDQALAYLLMSASSAAASRNDLWVSRFGTDAFNRKITSALWLSFIAFLMLALNALISTANLFSML.

The disordered stretch occupies residues 1-239; sequence MASTPRTPAP…RAAETKLPLS (239 aa). Over 1–314 the chain is Cytoplasmic; the sequence is MASTPRTPAP…AAVAVGERRE (314 aa). Positions 7-69 are enriched in pro residues; the sequence is TPAPVRSPPP…PLETPPPPSP (63 aa). 2 stretches are compositionally biased toward low complexity: residues 116–126 and 135–155; these read LSPMRLAAPRL and TPTGQNGQEEQEGGAKAAAAG. A compositionally biased stretch (pro residues) spans 193 to 204; the sequence is SPSPSPTPPSPL. A compositionally biased stretch (low complexity) spans 205–221; sequence TPAAAPVVNNNSNNKNN. A helical transmembrane segment spans residues 315–335; sequence LSVTLRLATAVLSLAAFSVIA. Residues 336–354 are Extracellular-facing; that stretch reads SARTSGWAGDYYAHHLQYR. The helical transmembrane segment at 355 to 375 threads the bilayer; it reads YAVAVNVIVCAYSIAQSFGEI. Residues 376 to 392 are Cytoplasmic-facing; it reads RRLISPRFIFRSMSSYY. A helical membrane pass occupies residues 393 to 413; it reads CSLFLDQALAYLLMSASSAAA. Residues 414 to 431 lie on the Extracellular side of the membrane; that stretch reads SRNDLWVSRFGTDAFNRK. Residues 432 to 452 traverse the membrane as a helical segment; the sequence is ITSALWLSFIAFLMLALNALI. The Cytoplasmic portion of the chain corresponds to 453–461; sequence STANLFSML.

It belongs to the Casparian strip membrane proteins (CASP) family. In terms of assembly, homodimer and heterodimers.

The protein localises to the cell membrane. The sequence is that of CASP-like protein 4U1 from Sorghum bicolor (Sorghum).